The following is a 407-amino-acid chain: Arylacetamide deacetylase-like 4 (407 aa).

Residues 1–4 (MAVP) are Cytoplasmic-facing. Residues 5–25 (WLVLLLALPIFFLGVFVWAVF) traverse the membrane as a helical; Signal-anchor for type II membrane protein segment. Topologically, residues 26 to 407 (EHFLTTDIPA…NAVVSYIKGI (382 aa)) are lumenal. Positions 119 to 121 (HGG) match the Involved in the stabilization of the negatively charged intermediate by the formation of the oxyanion hole motif. A glycan (N-linked (GlcNAc...) asparagine) is linked at Asn168. The active site involves Ser193. Asn269 is a glycosylation site (N-linked (GlcNAc...) asparagine). Catalysis depends on residues Asp347 and His377.

Belongs to the 'GDXG' lipolytic enzyme family.

Its subcellular location is the membrane. The protein is Arylacetamide deacetylase-like 4 (AADACL4) of Homo sapiens (Human).